The sequence spans 757 residues: UDP-N-acetylmuramoyl-L-alanyl-D-glutamate--2,6-diaminopimelate ligase MurE homolog, chloroplastic (757 aa).

Positions 1 to 11 are enriched in low complexity; it reads MATAPLAFHLP. Residues 1 to 53 constitute a chloroplast transit peptide; the sequence is MATAPLAFHLPFPFPSASRPPPRLLPPSRRPPAARLAATRRFRPPTADDEPPE. 3 disordered regions span residues 1 to 112, 126 to 152, and 172 to 195; these read MATA…DEFF, FTRR…ADEL, and VSLA…GDDG. The span at 12-30 shows a compositional bias: pro residues; the sequence is FPFPSASRPPPRLLPPSRR. Acidic residues-rich tracts occupy residues 47–56 and 142–152; these read ADDEPPEAAE and PEEEDGLADEL.

The protein belongs to the MurCDEF family. MurE subfamily. In terms of assembly, component of the plastid-encoded plastid RNA polymerase (PEP) complex.

The protein resides in the plastid. It is found in the chloroplast. Functionally, required for the activity of the plastid-encoded RNA polymerase (PEP) and full expression of genes transcribed by PEP. In Oryza sativa subsp. japonica (Rice), this protein is UDP-N-acetylmuramoyl-L-alanyl-D-glutamate--2,6-diaminopimelate ligase MurE homolog, chloroplastic.